Consider the following 335-residue polypeptide: ATP-dependent 6-phosphofructokinase (335 aa).

G11 is an ATP binding site. 21–25 (RAVVR) serves as a coordination point for ADP. ATP is bound by residues 72–73 (RY) and 102–105 (GDGS). D103 is a Mg(2+) binding site. A substrate-binding site is contributed by 125–127 (TID). Catalysis depends on D127, which acts as the Proton acceptor. ADP is bound at residue R154. Residues R162 and 169 to 171 (MGR) each bind substrate. ADP is bound by residues 185–187 (GAD) and 213–215 (KKH). Residues E222, R244, and 250 to 253 (HIQR) contribute to the substrate site.

The protein belongs to the phosphofructokinase type A (PFKA) family. ATP-dependent PFK group I subfamily. Prokaryotic clade 'B1' sub-subfamily. As to quaternary structure, homotetramer. Mg(2+) serves as cofactor.

The protein resides in the cytoplasm. It carries out the reaction beta-D-fructose 6-phosphate + ATP = beta-D-fructose 1,6-bisphosphate + ADP + H(+). It participates in carbohydrate degradation; glycolysis; D-glyceraldehyde 3-phosphate and glycerone phosphate from D-glucose: step 3/4. With respect to regulation, allosterically activated by ADP and other diphosphonucleosides, and allosterically inhibited by phosphoenolpyruvate. Functionally, catalyzes the phosphorylation of D-fructose 6-phosphate to fructose 1,6-bisphosphate by ATP, the first committing step of glycolysis. The chain is ATP-dependent 6-phosphofructokinase from Streptococcus pneumoniae serotype 19F (strain G54).